A 271-amino-acid chain; its full sequence is Large ribosomal subunit protein eL8 (271 aa).

It belongs to the eukaryotic ribosomal protein eL8 family.

The sequence is that of Large ribosomal subunit protein eL8 (RpL7A) from Drosophila melanogaster (Fruit fly).